We begin with the raw amino-acid sequence, 809 residues long: Valine--tRNA ligase (809 aa).

The 'HIGH' region signature appears at 60–70 (PFTSGELHMGH). Positions 546–550 (RMSKS) match the 'KMSKS' region motif. Residue K549 coordinates ATP.

Belongs to the class-I aminoacyl-tRNA synthetase family. ValS type 2 subfamily.

It is found in the cytoplasm. The enzyme catalyses tRNA(Val) + L-valine + ATP = L-valyl-tRNA(Val) + AMP + diphosphate. Functionally, catalyzes the attachment of valine to tRNA(Val). As ValRS can inadvertently accommodate and process structurally similar amino acids such as threonine, to avoid such errors, it has a 'posttransfer' editing activity that hydrolyzes mischarged Thr-tRNA(Val) in a tRNA-dependent manner. The polypeptide is Valine--tRNA ligase (Sulfurisphaera tokodaii (strain DSM 16993 / JCM 10545 / NBRC 100140 / 7) (Sulfolobus tokodaii)).